The following is a 355-amino-acid chain: GPN-loop GTPase 1 (355 aa).

The disordered stretch occupies residues 1–30 (MAEKAENLPSSSAEASEEPSPQTGPNVNQK). Over residues 9 to 21 (PSSSAEASEEPSP) the composition is skewed to low complexity. GTP is bound at residue 40 to 45 (GSGKTT). The Gly-Pro-Asn (GPN)-loop; involved in dimer interface signature appears at 97-99 (GPN). 200-203 (NKAD) lines the GTP pocket. Residues 286-311 (EKVLAEKKLLDEEERKKRDEETLKGK) are a coiled coil.

It belongs to the GPN-loop GTPase family. Heterodimer with GPN3. Binds to RNA polymerase II (RNAPII).

The protein localises to the cytoplasm. Its subcellular location is the nucleus. In terms of biological role, small GTPase required for proper nuclear import of RNA polymerase II (RNAPII). May act at an RNAP assembly step prior to nuclear import. This chain is GPN-loop GTPase 1, found in Caenorhabditis elegans.